Consider the following 249-residue polypeptide: Isoprenyl transferase 1 (249 aa).

Residue Asp30 is part of the active site. Position 30 (Asp30) interacts with Mg(2+). Residues 31–34, Trp35, Arg43, His47, and 75–77 contribute to the substrate site; these read GNGR and STE. Residue Asn78 is the Proton acceptor of the active site. Substrate is bound by residues Trp79, Arg81, Arg198, and 204 to 206; that span reads RMS. Glu217 is a Mg(2+) binding site.

The protein belongs to the UPP synthase family. In terms of assembly, homodimer. Mg(2+) is required as a cofactor.

In terms of biological role, catalyzes the condensation of isopentenyl diphosphate (IPP) with allylic pyrophosphates generating different type of terpenoids. The sequence is that of Isoprenyl transferase 1 from Tropheryma whipplei (strain Twist) (Whipple's bacillus).